The sequence spans 372 residues: Lipoyl synthase, mitochondrial (372 aa).

Positions 103, 108, 114, 134, 138, 141, and 349 each coordinate [4Fe-4S] cluster. The Radical SAM core domain occupies 119-338 (EHGTQTATIM…EERGNQLGFL (220 aa)).

Belongs to the radical SAM superfamily. Lipoyl synthase family. [4Fe-4S] cluster is required as a cofactor.

It is found in the mitochondrion. It catalyses the reaction [[Fe-S] cluster scaffold protein carrying a second [4Fe-4S](2+) cluster] + N(6)-octanoyl-L-lysyl-[protein] + 2 oxidized [2Fe-2S]-[ferredoxin] + 2 S-adenosyl-L-methionine + 4 H(+) = [[Fe-S] cluster scaffold protein] + N(6)-[(R)-dihydrolipoyl]-L-lysyl-[protein] + 4 Fe(3+) + 2 hydrogen sulfide + 2 5'-deoxyadenosine + 2 L-methionine + 2 reduced [2Fe-2S]-[ferredoxin]. The protein operates within protein modification; protein lipoylation via endogenous pathway; protein N(6)-(lipoyl)lysine from octanoyl-[acyl-carrier-protein]: step 2/2. Functionally, catalyzes the radical-mediated insertion of two sulfur atoms into the C-6 and C-8 positions of the octanoyl moiety bound to the lipoyl domains of lipoate-dependent enzymes, thereby converting the octanoylated domains into lipoylated derivatives. The polypeptide is Lipoyl synthase, mitochondrial (Drosophila willistoni (Fruit fly)).